A 244-amino-acid polypeptide reads, in one-letter code: Flavin-dependent thymidylate synthase (244 aa).

Positions I17–Q239 constitute a ThyX domain. FAD-binding positions include S68, R91 to R93, and E99. DUMP is bound by residues E88–R91, E99–R103, and R171. A ThyX motif motif is present at residues R91 to S101. FAD-binding positions include N187–R189 and N193. R198 serves as a coordination point for dUMP. The active-site Involved in ionization of N3 of dUMP, leading to its activation is R198.

The protein belongs to the thymidylate synthase ThyX family. In terms of assembly, homotetramer. Requires FAD as cofactor.

It carries out the reaction dUMP + (6R)-5,10-methylene-5,6,7,8-tetrahydrofolate + NADPH + H(+) = dTMP + (6S)-5,6,7,8-tetrahydrofolate + NADP(+). The protein operates within pyrimidine metabolism; dTTP biosynthesis. Functionally, catalyzes the reductive methylation of 2'-deoxyuridine-5'-monophosphate (dUMP) to 2'-deoxythymidine-5'-monophosphate (dTMP) while utilizing 5,10-methylenetetrahydrofolate (mTHF) as the methyl donor, and NADPH and FADH(2) as the reductant. The protein is Flavin-dependent thymidylate synthase of Tropheryma whipplei (strain Twist) (Whipple's bacillus).